A 357-amino-acid polypeptide reads, in one-letter code: Elongation factor Ts (357 aa).

The tract at residues 82–85 (TDFV) is involved in Mg(2+) ion dislocation from EF-Tu.

Belongs to the EF-Ts family.

The protein localises to the cytoplasm. Its function is as follows. Associates with the EF-Tu.GDP complex and induces the exchange of GDP to GTP. It remains bound to the aminoacyl-tRNA.EF-Tu.GTP complex up to the GTP hydrolysis stage on the ribosome. The sequence is that of Elongation factor Ts from Campylobacter jejuni subsp. jejuni serotype O:23/36 (strain 81-176).